The chain runs to 136 residues: Transmembrane protein 203 (136 aa).

Residues 1–51 (MLFSLRELVQWLGFATFEIFVHLLALLVFSVLLALRVDGLTPGLSWWNVFV) are interaction with STING1. Helical transmembrane passes span 14–34 (FATF…VLLA), 50–72 (FVPF…VRLF), 81–101 (VLRL…EMLL), and 112–132 (LWFG…MIRA). The tract at residues 52-136 (PFFAADGLST…LLMIRACRVN (85 aa)) is required for lysosomal localization of the STING-TMEM203 complex.

In terms of assembly, homodimer. Interacts with ATP2A2 and ITPR3. Interacts with STIM1 and STING1 (via transmembrane domain).

The protein resides in the endoplasmic reticulum membrane. Its subcellular location is the endoplasmic reticulum-Golgi intermediate compartment. It localises to the lysosome membrane. In terms of biological role, involved in the regulation of cellular calcium homeotasis. Required for spermatogenesis. Acts as a regulator of STING-mediated inflammatory signaling in macrophages. Forms a complex with STING, promoting the activity of TBK1 kinase and the transcription factor IRF3, leading to activation of type I interferon expression. In Mus musculus (Mouse), this protein is Transmembrane protein 203 (Tmem203).